Reading from the N-terminus, the 177-residue chain is Large ribosomal subunit protein uL6 (177 aa).

Belongs to the universal ribosomal protein uL6 family. As to quaternary structure, part of the 50S ribosomal subunit.

Its function is as follows. This protein binds to the 23S rRNA, and is important in its secondary structure. It is located near the subunit interface in the base of the L7/L12 stalk, and near the tRNA binding site of the peptidyltransferase center. In Variovorax paradoxus (strain S110), this protein is Large ribosomal subunit protein uL6.